We begin with the raw amino-acid sequence, 226 residues long: MDLINQIKNTLIVSCQAIGDEPLNDSYVLSKMAYALVLGGSKVLRLSQVEHIKAVKQVVDVPIIGLIKKHYDNSEVFITPTIKEVDQLVDLKVDIIALDATLRTRPDQDLTNLVKTIKTKYPNQLLLADCSSVEDAINAQNLGFDLIASTLRGSTKQTKGHNNLENNYQFLRDLKKVITKPIIAEGGIWTPQQAKEILNLGIHSVVVGTAITRLHSIVKYWNDILK.

The protein belongs to the NanE family.

It carries out the reaction an N-acyl-D-glucosamine 6-phosphate = an N-acyl-D-mannosamine 6-phosphate. The protein operates within amino-sugar metabolism; N-acetylneuraminate degradation; D-fructose 6-phosphate from N-acetylneuraminate: step 3/5. Converts N-acetylmannosamine-6-phosphate (ManNAc-6-P) to N-acetylglucosamine-6-phosphate (GlcNAc-6-P). In Mycoplasma capricolum subsp. capricolum (strain California kid / ATCC 27343 / NCTC 10154), this protein is Putative N-acetylmannosamine-6-phosphate 2-epimerase.